A 102-amino-acid chain; its full sequence is Gonadotropin subunit beta-1 (102 aa).

Disulfide bonds link C8/C51, C20/C65, C31/C77, C35/C79, and C82/C89. N12 is a glycosylation site (N-linked (GlcNAc...) asparagine).

Belongs to the glycoprotein hormones subunit beta family. As to quaternary structure, heterodimer of an alpha and a beta chain.

The protein resides in the secreted. Functionally, involved in gametogenesis and steroidogenesis. The sequence is that of Gonadotropin subunit beta-1 (cgba) from Thunnus obesus (Bigeye tuna).